A 596-amino-acid polypeptide reads, in one-letter code: Histone deacetylase 9 (596 aa).

Basic and acidic residues-rich tracts occupy residues 132-153 (REKEQKMEQQRKEQEAERHRQE) and 160-172 (RSKDRVKERAVAS). Disordered regions lie at residues 132–172 (REKE…AVAS), 214–258 (HTSL…VRSR), 293–313 (SSVSSSSPVSGPSSPNNGPVA), and 522–596 (QPEG…QQVT). Positions 172–222 (STEVKQKLQEFILSKSATKEPLTNGTSHSMGRHPKLWYTAAHHTSLDQSSP) are interaction with mef2. Over residues 221–237 (SPPPSGTSPTYKCPPPG) the composition is skewed to pro residues. Low complexity predominate over residues 293 to 312 (SSVSSSSPVSGPSSPNNGPV). The segment covering 522–536 (QPEGHLEEAEEDLHG) has biased composition (basic and acidic residues). Over residues 541 to 558 (QEKSSSIDNTRSYSSTDL) the composition is skewed to polar residues. Basic and acidic residues predominate over residues 567–585 (KVKEEPPDSENEIKTHLQS). Residues 586–596 (EQKSVFAQQVT) show a composition bias toward polar residues.

This sequence belongs to the histone deacetylase family. HD type 2 subfamily. Homodimer. Interacts with mef2. Broadly expressed.

Its subcellular location is the nucleus. It carries out the reaction N(6)-acetyl-L-lysyl-[histone] + H2O = L-lysyl-[histone] + acetate. Its function is as follows. Devoided of intrinsic deacetylase activity, promotes the deacetylation of lysine residues on the N-terminal part of the core histones (H2A, H2B, H3 and H4) by recruiting other histone deacetylases. Histone deacetylation gives a tag for epigenetic repression and plays an important role in transcriptional regulation, cell cycle progression and developmental events. Represses MEF2-dependent transcription. The polypeptide is Histone deacetylase 9 (hdac9) (Xenopus laevis (African clawed frog)).